The following is a 480-amino-acid chain: Cysteine--tRNA ligase (480 aa).

Cys-27 serves as a coordination point for Zn(2+). Residues Pro-29–Asn-39 carry the 'HIGH' region motif. 3 residues coordinate Zn(2+): Cys-221, His-246, and Glu-250. Positions Lys-278–Ser-282 match the 'KMSKS' region motif. Residue Lys-281 coordinates ATP.

Belongs to the class-I aminoacyl-tRNA synthetase family. Monomer. It depends on Zn(2+) as a cofactor.

It is found in the cytoplasm. It catalyses the reaction tRNA(Cys) + L-cysteine + ATP = L-cysteinyl-tRNA(Cys) + AMP + diphosphate. The chain is Cysteine--tRNA ligase from Borreliella afzelii (strain PKo) (Borrelia afzelii).